Consider the following 315-residue polypeptide: Atrochrysone carboxyl ACP thioesterase (315 aa).

Positions 95, 97, 99, and 100 each coordinate Zn(2+). D99 acts as the Proton donor/acceptor in catalysis.

This sequence belongs to the metallo-beta-lactamase superfamily. The cofactor is Zn(2+). In terms of tissue distribution, endocrocin is specifically produced in conidia.

The catalysed reaction is atrochrysone carboxyl-[ACP] + H2O = atrochrysone carboxylate + holo-[ACP] + H(+). In terms of biological role, atrochrysone carboxyl ACP thioesterase; part of the gene cluster that mediates the biosynthesis of endocrocin, a simple anthraquinone interesting for many biotechnological applications. The pathway begins with the synthesis of atrochrysone thioester by the polyketide synthase (PKS) encA. The atrochrysone carboxyl ACP thioesterase encB then breaks the thioester bond and releases the atrochrysone carboxylic acid from encA. The atrochrysone carboxylic acid is then converted to endocrocin anthrone which is further oxidized into endocrocin by the anthrone oxygenase encC. The exact function of encD has not been identified yet, but it negatively regulates endocrocin production, likely through the modification of endocrocin itself. This is Atrochrysone carboxyl ACP thioesterase from Aspergillus fumigatus (strain ATCC MYA-4609 / CBS 101355 / FGSC A1100 / Af293) (Neosartorya fumigata).